The following is a 1245-amino-acid chain: Nidogen-1 (1245 aa).

The first 28 residues, 1–28, serve as a signal peptide directing secretion; sequence MLDASGCSWAMWTWALLQLLLLVGPGGC. The 163-residue stretch at 106–268 folds into the NIDO domain; that stretch reads PFLADLDTTD…GVWVFEIGSP (163 aa). Residue asparagine 187 is glycosylated (N-linked (GlcNAc...) asparagine). 2 positions are modified to sulfotyrosine: tyrosine 290 and tyrosine 295. Threonine 299 carries O-linked (GalNAc...) threonine glycosylation. The interval 307-344 is disordered; sequence VATPSPSHSPRRGYPDPHNVPRILSPGYEATERPRGVP. Residue serine 331 is glycosylated (O-linked (GalNAc...) serine). O-linked (GalNAc...) threonine glycans are attached at residues threonine 337 and threonine 345. Threonine 348 is a glycosylation site (O-linked (GalNAc...) threonine; partial). Positions 384 to 424 constitute an EGF-like 1 domain; the sequence is SQQTCANNRHQCSVHAECRDYATGFCCRCVANYTGNGRQCV. 19 cysteine pairs are disulfide-bonded: cysteine 388/cysteine 401, cysteine 395/cysteine 410, cysteine 409/cysteine 616, cysteine 412/cysteine 423, cysteine 670/cysteine 683, cysteine 677/cysteine 693, cysteine 695/cysteine 706, cysteine 712/cysteine 725, cysteine 719/cysteine 734, cysteine 736/cysteine 748, cysteine 760/cysteine 775, cysteine 767/cysteine 785, cysteine 787/cysteine 798, cysteine 804/cysteine 815, cysteine 809/cysteine 824, cysteine 826/cysteine 837, cysteine 847/cysteine 876, cysteine 887/cysteine 894, and cysteine 896/cysteine 917. Residue asparagine 415 is glycosylated (N-linked (GlcNAc...) asparagine). Residues 428–665 enclose the Nidogen G2 beta-barrel domain; sequence SPQRVNGKVK…GPVRDGSPDA (238 aa). The EGF-like 2 domain maps to 666-707; sequence LQNPCYIGTHGCDSNAACRPGPGTQFTCECSIGFRGDGQTCY. The short motif at 700-702 is the Cell attachment site element; sequence RGD. One can recognise an EGF-like 3; calcium-binding domain in the interval 708–749; that stretch reads DIDECSEQPSRCGNHAVCNNLPGTFRCECVEGYHFSDRGTCV. Residues 756-799 enclose the EGF-like 4 domain; it reads PINYCETGLHNCDIPQRAQCIYMGGSSYTCSCLPGFSGDGRACR. One can recognise an EGF-like 5; calcium-binding domain in the interval 800 to 838; it reads DVDECQHSRCHPDAFCYNTPGSFTCQCKPGYQGDGFRCM. The 74-residue stretch at 844–917 folds into the Thyroglobulin type-1 domain; it reads KTRCQLEREH…RTPPGMRPPC (74 aa). 2 O-linked (GalNAc...) threonine glycosylation sites follow: threonine 920 and threonine 933. LDL-receptor class B repeat units lie at residues 988-1030, 1031-1073, 1074-1118, and 1119-1160; these read KVVY…DHLG, RTIF…DPVR, GNLY…DAFS, and SQLC…YGKN. The region spanning 1206–1242 is the EGF-like 6 domain; it reads GHNYCSVNNGGCTHLCLPTPGSRTCRCPDNTLGVDCI. 3 disulfide bridges follow: cysteine 1210–cysteine 1221, cysteine 1217–cysteine 1230, and cysteine 1232–cysteine 1241.

In terms of assembly, interacts with FBLN1. Interacts with LGALS3BP. Interacts with PLXDC1. Interacts with SVEP1. N- and O-glycosylated.

It is found in the secreted. It localises to the extracellular space. Its subcellular location is the extracellular matrix. The protein localises to the basement membrane. In terms of biological role, sulfated glycoprotein widely distributed in basement membranes and tightly associated with laminin. Also binds to collagen IV and perlecan. It probably has a role in cell-extracellular matrix interactions. The chain is Nidogen-1 (Nid1) from Mus musculus (Mouse).